Consider the following 125-residue polypeptide: MKLQKSKLHKNDQVLIISGKFKGRSGQIIAIDYKNETVKVRDINKVTKHVKPTQQKTEGGIETFEAGIHISNVALKFKTPKLKSKDKATSDTSITPLSAKEHTKIGYKIENNKKVRIAKRTGKSI.

The protein belongs to the universal ribosomal protein uL24 family. Part of the 50S ribosomal subunit.

In terms of biological role, one of two assembly initiator proteins, it binds directly to the 5'-end of the 23S rRNA, where it nucleates assembly of the 50S subunit. Functionally, one of the proteins that surrounds the polypeptide exit tunnel on the outside of the subunit. The protein is Large ribosomal subunit protein uL24 of Mycoplasma mobile (strain ATCC 43663 / 163K / NCTC 11711) (Mesomycoplasma mobile).